A 262-amino-acid polypeptide reads, in one-letter code: Small ribosomal subunit protein eS4C (262 aa).

One can recognise an S4 RNA-binding domain in the interval 42–105; it reads LPLIVFLRNR…GEHFRLVYDI (64 aa). Position 194 is a phosphothreonine (Thr194).

It belongs to the eukaryotic ribosomal protein eS4 family. In terms of assembly, component of the small ribosomal subunit (SSU). Mature yeast ribosomes consist of a small (40S) and a large (60S) subunit. The 40S small subunit contains 1 molecule of ribosomal RNA (18S rRNA) and at least 33 different proteins. The large 60S subunit contains 3 rRNA molecules (25S, 5.8S and 5S rRNA) and at least 46 different proteins.

The protein resides in the cytoplasm. Component of the ribosome, a large ribonucleoprotein complex responsible for the synthesis of proteins in the cell. The small ribosomal subunit (SSU) binds messenger RNAs (mRNAs) and translates the encoded message by selecting cognate aminoacyl-transfer RNA (tRNA) molecules. The large subunit (LSU) contains the ribosomal catalytic site termed the peptidyl transferase center (PTC), which catalyzes the formation of peptide bonds, thereby polymerizing the amino acids delivered by tRNAs into a polypeptide chain. The nascent polypeptides leave the ribosome through a tunnel in the LSU and interact with protein factors that function in enzymatic processing, targeting, and the membrane insertion of nascent chains at the exit of the ribosomal tunnel. This Schizosaccharomyces pombe (strain 972 / ATCC 24843) (Fission yeast) protein is Small ribosomal subunit protein eS4C (rps403).